Reading from the N-terminus, the 37-residue chain is Cytochrome b6-f complex subunit 5 (37 aa).

A helical transmembrane segment spans residues 5–25 (LLCGIVLGLIPITLMGLFVAA).

Belongs to the PetG family. As to quaternary structure, the 4 large subunits of the cytochrome b6-f complex are cytochrome b6, subunit IV (17 kDa polypeptide, PetD), cytochrome f and the Rieske protein, while the 4 small subunits are PetG, PetL, PetM and PetN. The complex functions as a dimer.

The protein resides in the cellular thylakoid membrane. Its function is as follows. Component of the cytochrome b6-f complex, which mediates electron transfer between photosystem II (PSII) and photosystem I (PSI), cyclic electron flow around PSI, and state transitions. PetG is required for either the stability or assembly of the cytochrome b6-f complex. This Synechococcus sp. (strain CC9311) protein is Cytochrome b6-f complex subunit 5.